We begin with the raw amino-acid sequence, 427 residues long: MAIQIFKVGLKDHSVLDPVLKRAREDLSSTLALVKPIVEDVKNRGDSALREYTQKFDEVIPPKSFVLEISKLNPKIDPKLKTALVKAAKNIRNFHKIQIPENKEIIIHGNKLGILHTPIESVSVYAPGGKALYPSTILMGVIPAKLAGVKNIQIVTPPRKGTLPDGLIAAAKIAGADRIVMAGGAQGIAAVSYGTESIPSSEFVVGPGNKFVTAAKVYLSGQGVIGIDSPAGPSEVLIIADDSADPMWVAADLLSQAEHGEDSVAILCTNSLSLAQKVKEEVEKALIERPKRGEMKRKSIEDHGKIFVFSNLEECFVFSNLFAPEHLEIQTKNFKKDLKKVKHAGSVFLGNYSPVAMGDYISGTNHILPTAGAARIYSSLGVSTFLKRVTWQEVSKKSIQNLYPHVKVLSEFEGLDEEHGNSVRIRR.

Residues tyrosine 125, glutamine 186, and asparagine 209 each contribute to the NAD(+) site. 3 residues coordinate substrate: serine 234, glutamine 256, and histidine 259. Zn(2+)-binding residues include glutamine 256 and histidine 259. Active-site proton acceptor residues include glutamate 325 and histidine 326. Substrate is bound by residues histidine 326, aspartate 359, glutamate 413, and histidine 419. A Zn(2+)-binding site is contributed by aspartate 359. Histidine 419 is a Zn(2+) binding site.

This sequence belongs to the histidinol dehydrogenase family. It depends on Zn(2+) as a cofactor.

It catalyses the reaction L-histidinol + 2 NAD(+) + H2O = L-histidine + 2 NADH + 3 H(+). It participates in amino-acid biosynthesis; L-histidine biosynthesis; L-histidine from 5-phospho-alpha-D-ribose 1-diphosphate: step 9/9. Functionally, catalyzes the sequential NAD-dependent oxidations of L-histidinol to L-histidinaldehyde and then to L-histidine. The polypeptide is Histidinol dehydrogenase (Leptospira interrogans serogroup Icterohaemorrhagiae serovar copenhageni (strain Fiocruz L1-130)).